The primary structure comprises 491 residues: Cysteine--tRNA ligase (491 aa).

Cys29 contacts Zn(2+). A 'HIGH' region motif is present at residues 31–41 (PTVYDFAHIGN). The Zn(2+) site is built by Cys227, His252, and Glu256. Residues 285–289 (KMSKS) carry the 'KMSKS' region motif. Lys288 contacts ATP.

The protein belongs to the class-I aminoacyl-tRNA synthetase family. Monomer. It depends on Zn(2+) as a cofactor.

It localises to the cytoplasm. The catalysed reaction is tRNA(Cys) + L-cysteine + ATP = L-cysteinyl-tRNA(Cys) + AMP + diphosphate. This chain is Cysteine--tRNA ligase, found in Rhodopseudomonas palustris (strain TIE-1).